Consider the following 192-residue polypeptide: tRNA (cytidine(56)-2'-O)-methyltransferase (192 aa).

Residues L84 and 112–116 contribute to the S-adenosyl-L-methionine site; that span reads GGEKV.

This sequence belongs to the aTrm56 family. Homodimer.

Its subcellular location is the cytoplasm. It catalyses the reaction cytidine(56) in tRNA + S-adenosyl-L-methionine = 2'-O-methylcytidine(56) in tRNA + S-adenosyl-L-homocysteine + H(+). Functionally, specifically catalyzes the AdoMet-dependent 2'-O-ribose methylation of cytidine at position 56 in tRNAs. The sequence is that of tRNA (cytidine(56)-2'-O)-methyltransferase from Halobacterium salinarum (strain ATCC 700922 / JCM 11081 / NRC-1) (Halobacterium halobium).